Reading from the N-terminus, the 627-residue chain is Phosphomethylpyrimidine synthase (627 aa).

Residues Asn-233, Met-262, Tyr-291, His-327, 347–349 (SRG), 388–391 (DGLR), and Glu-427 contribute to the substrate site. His-431 contacts Zn(2+). Substrate is bound at residue Tyr-454. His-495 provides a ligand contact to Zn(2+). [4Fe-4S] cluster-binding residues include Cys-575, Cys-578, and Cys-583.

This sequence belongs to the ThiC family. In terms of assembly, homodimer. The cofactor is [4Fe-4S] cluster.

The enzyme catalyses 5-amino-1-(5-phospho-beta-D-ribosyl)imidazole + S-adenosyl-L-methionine = 4-amino-2-methyl-5-(phosphooxymethyl)pyrimidine + CO + 5'-deoxyadenosine + formate + L-methionine + 3 H(+). The protein operates within cofactor biosynthesis; thiamine diphosphate biosynthesis. Catalyzes the synthesis of the hydroxymethylpyrimidine phosphate (HMP-P) moiety of thiamine from aminoimidazole ribotide (AIR) in a radical S-adenosyl-L-methionine (SAM)-dependent reaction. The polypeptide is Phosphomethylpyrimidine synthase (Acidithiobacillus ferrooxidans (strain ATCC 23270 / DSM 14882 / CIP 104768 / NCIMB 8455) (Ferrobacillus ferrooxidans (strain ATCC 23270))).